The following is a 267-amino-acid chain: Diacetylchitobiose deacetylase (267 aa).

This sequence belongs to the PIGL family. In terms of assembly, homohexamer.

Its subcellular location is the cytoplasm. It carries out the reaction N,N'-diacetylchitobiose + H2O = beta-D-glucosaminyl-(1-&gt;4)-N-acetyl-D-glucosamine + acetate. It participates in glycan degradation; chitin degradation. In terms of biological role, deacylates the non-reducing end of diacetylchitobiose (GlcNAc2). Can also use N-acetylglucosamine (GlcNAc) and N-acetylchitotriose (GlcNAc3). Probably involved in chitin degradation. This is Diacetylchitobiose deacetylase (dac) from Thermococcus kodakarensis (strain ATCC BAA-918 / JCM 12380 / KOD1) (Pyrococcus kodakaraensis (strain KOD1)).